The chain runs to 561 residues: Sesquiterpene synthase 2 (561 aa).

Aspartate 313, aspartate 317, aspartate 458, and glutamate 466 together coordinate Mg(2+). The short motif at 313–317 is the DDXXD motif element; the sequence is DDIYD.

The protein belongs to the terpene synthase family. Tpsa subfamily. The cofactor is Mn(2+). Requires Mg(2+) as cofactor.

It localises to the cytoplasm. The catalysed reaction is (2E,6E)-farnesyl diphosphate + H2O = kunzeaol + diphosphate. Its pathway is secondary metabolite biosynthesis; terpenoid biosynthesis. Involved in the biosynthesis of kunzeaol. Produces mainly (-)-germacrene D along with gamma-cadinene. The polypeptide is Sesquiterpene synthase 2 (STS2) (Thapsia garganica (Deadly carrot)).